The primary structure comprises 221 residues: tRNA (guanine-N(7)-)-methyltransferase (221 aa).

The S-adenosyl-L-methionine site is built by glutamate 43, glutamate 68, and aspartate 123. Aspartate 123 is a catalytic residue. Substrate-binding positions include lysine 127, aspartate 159, and 199–202; that span reads TEYE.

Belongs to the class I-like SAM-binding methyltransferase superfamily. TrmB family.

The catalysed reaction is guanosine(46) in tRNA + S-adenosyl-L-methionine = N(7)-methylguanosine(46) in tRNA + S-adenosyl-L-homocysteine. Its pathway is tRNA modification; N(7)-methylguanine-tRNA biosynthesis. In terms of biological role, catalyzes the formation of N(7)-methylguanine at position 46 (m7G46) in tRNA. This Mycoplasma mycoides subsp. mycoides SC (strain CCUG 32753 / NCTC 10114 / PG1) protein is tRNA (guanine-N(7)-)-methyltransferase.